Consider the following 522-residue polypeptide: Stellatic acid synthase (522 aa).

The helical transmembrane segment at 23 to 43 (IYGIYEPLLALFAVYSVAVVV) threads the bilayer. N-linked (GlcNAc...) asparagine glycosylation is found at N267 and N451. C464 serves as a coordination point for heme. N495 carries N-linked (GlcNAc...) asparagine glycosylation.

This sequence belongs to the cytochrome P450 family. The cofactor is heme.

Its subcellular location is the membrane. It carries out the reaction stellata-2,6,19-triene + 3 reduced [NADPH--hemoprotein reductase] + 3 O2 = stellatate + 3 oxidized [NADPH--hemoprotein reductase] + 4 H2O + 4 H(+). Its pathway is secondary metabolite biosynthesis; terpenoid biosynthesis. Functionally, cytochrome P450 monooxygenase; part of the gene cluster that mediates the biosynthesis of the sesterterpene stellatic acid. The first step in the pathway is performed by the stellatatriene synthase that possesses both prenyl transferase and terpene cyclase activity, converting isopentenyl diphosphate and dimethylallyl diphosphate into geranylgeranyl diphosphate (GGDP) and then converting GGDP into stellata-2,6,19-triene. The cytochrome P450 monooxygenase Stl-P450 then catalyzes three successive oxidation reactions on the C-20 methyl group to generate the carboxylic acid of stellatic acid. The polypeptide is Stellatic acid synthase (Emericella variicolor (Aspergillus stellatus)).